Here is a 267-residue protein sequence, read N- to C-terminus: Translation initiation factor 2 subunit alpha (267 aa).

The region spanning Gly12 to Lys83 is the S1 motif domain.

It belongs to the eIF-2-alpha family. In terms of assembly, heterotrimer composed of an alpha, a beta and a gamma chain.

Functionally, eIF-2 functions in the early steps of protein synthesis by forming a ternary complex with GTP and initiator tRNA. This Hyperthermus butylicus (strain DSM 5456 / JCM 9403 / PLM1-5) protein is Translation initiation factor 2 subunit alpha.